We begin with the raw amino-acid sequence, 218 residues long: Elongation factor Ts (218 aa).

Residues 82-85 are involved in Mg(2+) ion dislocation from EF-Tu; sequence TDFV.

The protein belongs to the EF-Ts family.

The protein localises to the cytoplasm. In terms of biological role, associates with the EF-Tu.GDP complex and induces the exchange of GDP to GTP. It remains bound to the aminoacyl-tRNA.EF-Tu.GTP complex up to the GTP hydrolysis stage on the ribosome. This Synechocystis sp. (strain ATCC 27184 / PCC 6803 / Kazusa) protein is Elongation factor Ts (tsf).